Reading from the N-terminus, the 569-residue chain is CUE domain-containing protein 5 (569 aa).

Residues 17 to 60 (MAEKARATLKEAFPNTDDAIIRAVLAASGYKLEPAFNALLGLSD) form the CUE domain. 3 disordered regions span residues 67 to 139 (MEQA…DDYS), 175 to 275 (DGEE…SSSA), and 311 to 569 (EELE…GKET). A compositionally biased stretch (basic and acidic residues) spans 79 to 100 (AAHDDPVQRQLEEDERCARELA). The span at 104-113 (NSHRPERRRK) shows a compositional bias: basic residues. Residues 234–249 (SDPHMLNEKDFERLRL) show a composition bias toward basic and acidic residues. The segment covering 250-274 (ESSSSPMMRRSSLNSNRRSVESSSS) has biased composition (low complexity). Residues 329–340 (VVVEKKPDESRK) show a composition bias toward basic and acidic residues. Over residues 347 to 364 (ETVSEEQMGSSNAKSKVL) the composition is skewed to polar residues. Composition is skewed to basic and acidic residues over residues 367-381 (EPKDSTSVEAEKTET), 399-500 (ISEK…KETD), and 507-558 (KEEK…KIEE).

The protein resides in the cytoplasm. This chain is CUE domain-containing protein 5, found in Schizosaccharomyces pombe (strain 972 / ATCC 24843) (Fission yeast).